A 343-amino-acid polypeptide reads, in one-letter code: Anthranilate phosphoribosyltransferase (343 aa).

5-phospho-alpha-D-ribose 1-diphosphate is bound by residues glycine 78, glycine 81 to aspartate 82, threonine 86, asparagine 88 to threonine 91, lysine 106 to serine 114, and serine 118. Glycine 78 lines the anthranilate pocket. Position 90 (serine 90) interacts with Mg(2+). Asparagine 109 contacts anthranilate. Arginine 164 contributes to the anthranilate binding site. Residues aspartate 223 and glutamate 224 each coordinate Mg(2+).

It belongs to the anthranilate phosphoribosyltransferase family. In terms of assembly, homodimer. Requires Mg(2+) as cofactor.

It catalyses the reaction N-(5-phospho-beta-D-ribosyl)anthranilate + diphosphate = 5-phospho-alpha-D-ribose 1-diphosphate + anthranilate. It functions in the pathway amino-acid biosynthesis; L-tryptophan biosynthesis; L-tryptophan from chorismate: step 2/5. In terms of biological role, catalyzes the transfer of the phosphoribosyl group of 5-phosphorylribose-1-pyrophosphate (PRPP) to anthranilate to yield N-(5'-phosphoribosyl)-anthranilate (PRA). This Chlamydia caviae (strain ATCC VR-813 / DSM 19441 / 03DC25 / GPIC) (Chlamydophila caviae) protein is Anthranilate phosphoribosyltransferase.